The sequence spans 416 residues: Gamma-glutamyl phosphate reductase (416 aa).

It belongs to the gamma-glutamyl phosphate reductase family.

Its subcellular location is the cytoplasm. It carries out the reaction L-glutamate 5-semialdehyde + phosphate + NADP(+) = L-glutamyl 5-phosphate + NADPH + H(+). The protein operates within amino-acid biosynthesis; L-proline biosynthesis; L-glutamate 5-semialdehyde from L-glutamate: step 2/2. Functionally, catalyzes the NADPH-dependent reduction of L-glutamate 5-phosphate into L-glutamate 5-semialdehyde and phosphate. The product spontaneously undergoes cyclization to form 1-pyrroline-5-carboxylate. This chain is Gamma-glutamyl phosphate reductase, found in Streptococcus pyogenes serotype M6 (strain ATCC BAA-946 / MGAS10394).